The sequence spans 203 residues: uncharacterized protein (203 aa).

Belongs to the mimivirus L332/L333/L334 family.

This is an uncharacterized protein from Acanthamoeba polyphaga mimivirus (APMV).